Reading from the N-terminus, the 1406-residue chain is DNA-directed RNA polymerase subunit beta' (1406 aa).

Residues Cys70, Cys72, Cys85, and Cys88 each contribute to the Zn(2+) site. The Mg(2+) site is built by Asp460, Asp462, and Asp464. Positions 814, 888, 895, and 898 each coordinate Zn(2+).

This sequence belongs to the RNA polymerase beta' chain family. The RNAP catalytic core consists of 2 alpha, 1 beta, 1 beta' and 1 omega subunit. When a sigma factor is associated with the core the holoenzyme is formed, which can initiate transcription. It depends on Mg(2+) as a cofactor. Zn(2+) serves as cofactor.

It carries out the reaction RNA(n) + a ribonucleoside 5'-triphosphate = RNA(n+1) + diphosphate. Its function is as follows. DNA-dependent RNA polymerase catalyzes the transcription of DNA into RNA using the four ribonucleoside triphosphates as substrates. This is DNA-directed RNA polymerase subunit beta' from Photorhabdus laumondii subsp. laumondii (strain DSM 15139 / CIP 105565 / TT01) (Photorhabdus luminescens subsp. laumondii).